The chain runs to 514 residues: Cytochrome P450 monooxygenase nodJ (514 aa).

The helical transmembrane segment at 2-24 (ELIVIIITLAFCILLYGTRWRAA) threads the bilayer. N-linked (GlcNAc...) asparagine glycosylation is found at Asn-144, Asn-245, and Asn-416. Residue Cys-432 participates in heme binding.

Belongs to the cytochrome P450 family. Heme serves as cofactor.

The protein resides in the membrane. Its pathway is secondary metabolite biosynthesis. Functionally, cytochrome P450 monooxygenase; part of the gene cluster that mediates the biosynthesis of the indole diterpenes nodulisporic acids (NA). Nodulisporic acid A (NAA) and its chemically modified derivatives are of particular significance because of their highly potent insecticidal activity against blood-feeding arthropods and lack of observable adverse effects on mammals, in particular the tremogenicity associated with the paspaline-derived IDTs is not observed. The geranylgeranyl diphosphate (GGPP) synthase ggs1, localized outside of the cluster, is proposed to catalyze the first step in nodulisporic acid biosynthesis via conversion of farnesyl pyrophosphate and isopentyl pyrophosphate into geranylgeranyl pyrophosphate (GGPP). Condensation of indole-3-glycerol phosphate with GGPP by the prenyl transferase nodC then forms 3-geranylgeranylindole (3-GGI). Epoxidation by the FAD-dependent monooxygenase nodM leads to a single-epoxidized-GGI that is substrate of the terpene cyclase nodB for cyclization to yield emindole SB. The terminal methyl carbon, C28, of emindole SB is then oxidized by the cytochrome P450 monooxygenase nodW to produce nodulisporic acid F (NAF), the pentacyclic core of NAA. NAF is converted to nodulisporic acid E (NAE) via prenylation. This step is probably performed by one of the indole diterpene prenyltransferases nodD1 or nodD2. Several oxidation steps performed by the FAD-linked oxidoreductase nodO and one of the cytochrome P450 monooxygenase nodR, nodX or nodZ further convert NAE to nodulisporic acid D (NAD). NAD is substrate of cytochrome P450 monooxygenase nodJ to produce the precursor of nodulisporic acid C (NAC), converted to NAC by one of the indole diterpene prenyltransferases nodD1 or nodD2. The FAD-dependent monooxygenase nodY2 then oxidizes NAC to nodulisporic acid B (NAB). Finally NAB is converted to NAA by one of the cytochrome P450 monooxygenases nodR, nodX or nodZ. The sequence is that of Cytochrome P450 monooxygenase nodJ from Hypoxylon pulicicidum.